The primary structure comprises 563 residues: Bifunctional dihydrofolate reductase-thymidylate synthase (563 aa).

Residues 3–195 (KFNIIAAINN…ILLRFQEYSV (193 aa)) form the DHFR domain. 117–124 (GGGVIYDL) contributes to the NADP(+) binding site. Residues 275–563 (YIELVKTIME…CPSISAEMIA (289 aa)) are thymidylate synthase. Arginine 292 is a dUMP binding site. The active site involves cysteine 435. DUMP is bound by residues histidine 436, 464-468 (QRSWD), asparagine 474, and 504-506 (HIY).

This sequence in the N-terminal section; belongs to the dihydrofolate reductase family. The protein in the C-terminal section; belongs to the thymidylate synthase family.

It carries out the reaction (6S)-5,6,7,8-tetrahydrofolate + NADP(+) = 7,8-dihydrofolate + NADPH + H(+). The enzyme catalyses dUMP + (6R)-5,10-methylene-5,6,7,8-tetrahydrofolate = 7,8-dihydrofolate + dTMP. It functions in the pathway cofactor biosynthesis; tetrahydrofolate biosynthesis; 5,6,7,8-tetrahydrofolate from 7,8-dihydrofolate: step 1/1. Its function is as follows. Bifunctional enzyme. Involved in de novo dTMP biosynthesis. Key enzyme in folate metabolism. Catalyzes an essential reaction for de novo glycine and purine synthesis, DNA precursor synthesis, and for the conversion of dUMP to dTMP. This chain is Bifunctional dihydrofolate reductase-thymidylate synthase, found in Acanthamoeba polyphaga mimivirus (APMV).